Here is a 226-residue protein sequence, read N- to C-terminus: 7-cyano-7-deazaguanine synthase (226 aa).

12-22 provides a ligand contact to ATP; sequence LSGGLDSATVV. Residues Cys191, Cys201, Cys204, and Cys207 each contribute to the Zn(2+) site.

This sequence belongs to the QueC family. Zn(2+) is required as a cofactor.

The enzyme catalyses 7-carboxy-7-deazaguanine + NH4(+) + ATP = 7-cyano-7-deazaguanine + ADP + phosphate + H2O + H(+). Its pathway is purine metabolism; 7-cyano-7-deazaguanine biosynthesis. In terms of biological role, catalyzes the ATP-dependent conversion of 7-carboxy-7-deazaguanine (CDG) to 7-cyano-7-deazaguanine (preQ(0)). This Pseudomonas syringae pv. tomato (strain ATCC BAA-871 / DC3000) protein is 7-cyano-7-deazaguanine synthase.